The following is a 244-amino-acid chain: MKIDLNADLGEGCASDAELLTLVSSANIACGFHAGDAQTMQACVREAIKNGVAIGAHPSFPDRENFGRSAMQLPPETVYAQTLYQIGALATIARAQGGVMRHVKPHGMLYNQAAKEAQLADAIARAVYACDPALVLVGLAGSELIRAGKQYGLTTREEVFADRGYQADGSLVPRSQPGALIENEEQALAQTLEMVQHGRVKSITGEWATVTAQTVCLHGDGEHALAFARRLRSTFAEKEIVVAA.

The protein belongs to the LamB/PxpA family. In terms of assembly, forms a complex composed of PxpA, PxpB and PxpC.

It carries out the reaction 5-oxo-L-proline + ATP + 2 H2O = L-glutamate + ADP + phosphate + H(+). In terms of biological role, catalyzes the cleavage of 5-oxoproline to form L-glutamate coupled to the hydrolysis of ATP to ADP and inorganic phosphate. The chain is 5-oxoprolinase subunit A from Escherichia coli O139:H28 (strain E24377A / ETEC).